A 302-amino-acid polypeptide reads, in one-letter code: tRNA dimethylallyltransferase (302 aa).

9 to 16 (GPTAAGKS) contacts ATP. 11–16 (TAAGKS) contributes to the substrate binding site. The tract at residues 34–37 (DSRQ) is interaction with substrate tRNA.

Belongs to the IPP transferase family. Monomer. Requires Mg(2+) as cofactor.

It carries out the reaction adenosine(37) in tRNA + dimethylallyl diphosphate = N(6)-dimethylallyladenosine(37) in tRNA + diphosphate. Catalyzes the transfer of a dimethylallyl group onto the adenine at position 37 in tRNAs that read codons beginning with uridine, leading to the formation of N6-(dimethylallyl)adenosine (i(6)A). This is tRNA dimethylallyltransferase from Gloeobacter violaceus (strain ATCC 29082 / PCC 7421).